The chain runs to 63 residues: Putative ankyrin repeat protein RF_p14 (63 aa).

ANK repeat units follow at residues Lys11 to His43 and Gln44 to Ile63.

The chain is Putative ankyrin repeat protein RF_p14 from Rickettsia felis (strain ATCC VR-1525 / URRWXCal2) (Rickettsia azadi).